The chain runs to 136 residues: Small ribosomal subunit protein uS9 (136 aa).

The protein belongs to the universal ribosomal protein uS9 family.

This Borrelia duttonii (strain Ly) protein is Small ribosomal subunit protein uS9.